We begin with the raw amino-acid sequence, 142 residues long: Large ribosomal subunit protein cL37 alpha (142 aa).

A chloroplast-targeting transit peptide spans 1 to 62; it reads MALLSPLLSL…AQKRGTVVAM (62 aa). The interval 123–142 is disordered; it reads RKLRKRGAWPPSKMKKLKNV.

It belongs to the chloroplast-specific ribosomal protein cL37 family. In terms of assembly, component of the chloroplast large ribosomal subunit (LSU). Mature 70S chloroplast ribosomes of higher plants consist of a small (30S) and a large (50S) subunit. The 30S small subunit contains 1 molecule of ribosomal RNA (16S rRNA) and 24 different proteins. The 50S large subunit contains 3 rRNA molecules (23S, 5S and 4.5S rRNA) and 33 different proteins.

It is found in the plastid. Its subcellular location is the chloroplast. Component of the chloroplast ribosome (chloro-ribosome), a dedicated translation machinery responsible for the synthesis of chloroplast genome-encoded proteins, including proteins of the transcription and translation machinery and components of the photosynthetic apparatus. The chain is Large ribosomal subunit protein cL37 alpha (PSRP5) from Spinacia oleracea (Spinach).